A 197-amino-acid chain; its full sequence is Glycerol-3-phosphate acyltransferase (197 aa).

5 helical membrane-spanning segments follow: residues 2–22 (LDVILVIIGYLIGSISSAIVV), 53–73 (AGITLLGDWLKGTLPVLLAWL), 78–98 (PVVASAAGLAAFFGHLFPVYF), 112–132 (VILAWSPLALLATVVTWLAVA), and 152–174 (YMLWLSASPVLTAATAILTAAIV).

This sequence belongs to the PlsY family. Probably interacts with PlsX.

The protein resides in the cell inner membrane. It carries out the reaction an acyl phosphate + sn-glycerol 3-phosphate = a 1-acyl-sn-glycero-3-phosphate + phosphate. It participates in lipid metabolism; phospholipid metabolism. In terms of biological role, catalyzes the transfer of an acyl group from acyl-phosphate (acyl-PO(4)) to glycerol-3-phosphate (G3P) to form lysophosphatidic acid (LPA). This enzyme utilizes acyl-phosphate as fatty acyl donor, but not acyl-CoA or acyl-ACP. This is Glycerol-3-phosphate acyltransferase from Halorhodospira halophila (strain DSM 244 / SL1) (Ectothiorhodospira halophila (strain DSM 244 / SL1)).